A 216-amino-acid polypeptide reads, in one-letter code: Octanoyltransferase (216 aa).

One can recognise a BPL/LPL catalytic domain in the interval 30 to 204 (KNNINEIWLL…NCKKFLMMNN (175 aa)). Substrate is bound by residues 68–75 (RGGHMTFH), 135–137 (SIG), and 148–150 (GLA). Cysteine 166 serves as the catalytic Acyl-thioester intermediate.

It belongs to the LipB family.

It is found in the cytoplasm. It catalyses the reaction octanoyl-[ACP] + L-lysyl-[protein] = N(6)-octanoyl-L-lysyl-[protein] + holo-[ACP] + H(+). It functions in the pathway protein modification; protein lipoylation via endogenous pathway; protein N(6)-(lipoyl)lysine from octanoyl-[acyl-carrier-protein]: step 1/2. In terms of biological role, catalyzes the transfer of endogenously produced octanoic acid from octanoyl-acyl-carrier-protein onto the lipoyl domains of lipoate-dependent enzymes. Lipoyl-ACP can also act as a substrate although octanoyl-ACP is likely to be the physiological substrate. In Wigglesworthia glossinidia brevipalpis, this protein is Octanoyltransferase.